We begin with the raw amino-acid sequence, 472 residues long: 2-oxoglutarate carboxylase small subunit (472 aa).

The Biotin carboxylation domain occupies 1–445 (MFKKVLVANR…TTRYLEEHPH (445 aa)). Residues K115 and E199 each coordinate ATP. Residues 119–316 (KEVMKRAGVP…IVKWQIRIAA (198 aa)) form the ATP-grasp domain. Residue R291 is part of the active site.

As to quaternary structure, heterohexadecamer of 8 large subunits and 8 small subunits. Mg(2+) is required as a cofactor. Mn(2+) serves as cofactor. It depends on Co(2+) as a cofactor.

It carries out the reaction hydrogencarbonate + 2-oxoglutarate + ATP = (S)-oxalosuccinate + ADP + phosphate + H(+). This chain is 2-oxoglutarate carboxylase small subunit, found in Hydrogenobacter thermophilus (strain DSM 6534 / IAM 12695 / TK-6).